The primary structure comprises 199 residues: UPF0637 protein LVIS_1261 (199 aa).

This sequence belongs to the UPF0637 family.

This chain is UPF0637 protein LVIS_1261, found in Levilactobacillus brevis (strain ATCC 367 / BCRC 12310 / CIP 105137 / JCM 1170 / LMG 11437 / NCIMB 947 / NCTC 947) (Lactobacillus brevis).